Consider the following 251-residue polypeptide: MNDAAPMSPAEFEQALRAKGAFYHIHHPYHVAMYEGRATREQIQGWVANRFYYQVNIPMKDAAILANCPDREVRREWVQRLLDHDGAPGEDGGIEAWLRLGQAVGLDPDQLRSQELVLPGVRFAVDAYVNFARRASWQEAASSSLTELFAPQIHQSRLDSWPQHYPWIDPAGYEYFRTRLGQARRDVEHGLAITLAHYTTREGQARMLEILQFKLDILWSMLDAMSMAYELNRPPYHSVTSERVWHKGIAL.

It belongs to the PqqC family.

It catalyses the reaction 6-(2-amino-2-carboxyethyl)-7,8-dioxo-1,2,3,4,7,8-hexahydroquinoline-2,4-dicarboxylate + 3 O2 = pyrroloquinoline quinone + 2 H2O2 + 2 H2O + H(+). It functions in the pathway cofactor biosynthesis; pyrroloquinoline quinone biosynthesis. Its function is as follows. Ring cyclization and eight-electron oxidation of 3a-(2-amino-2-carboxyethyl)-4,5-dioxo-4,5,6,7,8,9-hexahydroquinoline-7,9-dicarboxylic-acid to PQQ. This Pseudomonas entomophila (strain L48) protein is Pyrroloquinoline-quinone synthase.